A 280-amino-acid chain; its full sequence is MQQPLNYPYPQIYWVDSRASSPWGPPGSVLPCPSSVPGRPGQRRPPPPPPPTLPPPPPPPPLPPLPLPPLKTRRDHNTGLCLLVMFFMVLVALVGLGLGMFQLFHLQKELAELRESTSQKHVASSLEKQIGQLNPPSEKRELRKVAHLTGKPNSRSIPLEWEDTYGIALVSGVKYKKGGLVINDTGMYFVYSKVNFRGQSCNNQPLNHKVYMRNSKYPQDLVLMEGKMMNYCTTGQMWARSSYLGAVFNLTSADHLYVNVSELSLVSFEESKTFFGLYKL.

The Cytoplasmic segment spans residues 1 to 80 (MQQPLNYPYP…KTRRDHNTGL (80 aa)). The interval 20 to 71 (SSPWGPPGSVLPCPSSVPGRPGQRRPPPPPPPTLPPPPPPPPLPPLPLPPLK) is disordered. The segment covering 43 to 69 (RRPPPPPPPTLPPPPPPPPLPPLPLPP) has biased composition (pro residues). The chain crosses the membrane as a helical; Signal-anchor for type II membrane protein span at residues 81–101 (CLLVMFFMVLVALVGLGLGMF). Topologically, residues 102–280 (QLFHLQKELA…SKTFFGLYKL (179 aa)) are extracellular. In terms of domain architecture, THD spans 144–280 (KVAHLTGKPN…SKTFFGLYKL (137 aa)). Asn183 carries N-linked (GlcNAc...) asparagine glycosylation. An intrachain disulfide couples Cys201 to Cys232. Asn249 and Asn259 each carry an N-linked (GlcNAc...) asparagine glycan.

Belongs to the tumor necrosis factor family. Homotrimer. Interacts with ARHGAP9, BAIAP2L1, BTK, CACNB3, CACNB4, CRK, DLG2, DNMBP, DOCK4, EPS8L3, FGR, FYB1, FYN, HCK, ITK, ITSN2, KALRN, LYN, MACC1, MIA, MPP4, MYO15A, NCF1, NCK1, NCK2, NCKIPSD, OSTF1, PIK3R1, PSTPIP1, RIMBP3C, SAMSN1, SH3GL3, SH3PXD2B, SH3PXD2A, SH3RF2, SKAP2, SNX33, SNX9, SORBS3, SPTA1, SRC, SRGAP1, SRGAP2, SRGAP3, TEC, TJP3 and YES1. Post-translationally, the soluble form derives from the membrane form by proteolytic processing. The membrane-bound form undergoes two successive intramembrane proteolytic cleavages. The first one is processed by ADAM10 producing an N-terminal fragment, which lacks the receptor-binding extracellular domain. This ADAM10-processed FasL (FasL APL) remnant form is still membrane anchored and further processed by SPPL2A that liberates the FasL intracellular domain (FasL ICD). FasL shedding by ADAM10 is a prerequisite for subsequent intramembrane cleavage by SPPL2A in T-cells. Phosphorylated by FGR on tyrosine residues; this is required for ubiquitination and subsequent internalization. In terms of processing, N-glycosylated. Glycosylation enhances apoptotic activity. Post-translationally, monoubiquitinated.

Its subcellular location is the cell membrane. It localises to the cytoplasmic vesicle lumen. The protein resides in the lysosome lumen. The protein localises to the secreted. It is found in the nucleus. Cytokine that binds to TNFRSF6/FAS, a receptor that transduces the apoptotic signal into cells. Involved in cytotoxic T-cell-mediated apoptosis, natural killer cell-mediated apoptosis and in T-cell development. Initiates fratricidal/suicidal activation-induced cell death (AICD) in antigen-activated T-cells contributing to the termination of immune responses. TNFRSF6/FAS-mediated apoptosis has also a role in the induction of peripheral tolerance. Binds to TNFRSF6B/DcR3, a decoy receptor that blocks apoptosis. Its function is as follows. Induces FAS-mediated activation of NF-kappa-B, initiating non-apoptotic signaling pathways. Can induce apoptosis but does not appear to be essential for this process. Functionally, cytoplasmic form induces gene transcription inhibition. This chain is Tumor necrosis factor ligand superfamily member 6 (FASLG), found in Felis catus (Cat).